Reading from the N-terminus, the 605-residue chain is MTGASLALTAAVVAHAYYLKNQFYPTVVYLTKSSPSMAVLYIQAFVLVFLLGKFMGKVFFGQLRAAEMEHLLERSWYAVTETCLAFTVFRDDFSPRFVALFTLLLFLKCFHWLAEDRVDFMERSPNISWLFHFRILALMLLLGVLDAFFVSHAYHSLVIRGASVQLVFGFEYAILMTVILTVFIKYILHSVDLQSENPWDNKAVYMLYTELFTGFIKVLLYVAFMTIMVKVHTFPLFAIRPMYLAMRQFKKAVTDAIMSRRAIRNMNTLYPDATAEELQAMDNVCIICREEMVTGAKRLPCNHIFHTSCLRSWFQRQQTCPTCRMDVLRASLPTQPQTPTEQQNQHQNQAQQQPTPVIPPQPNFPPGILPPFPPGMFPLWPPMGPFPPVPGAPGGNPPDEANPGSSSGSSPRPGETSNVGSESQPGAALPGFPFPPPFLGMPILPPFGLPPMPMPPAGFTGLTDEELRAMEGHERQNLEARLQCLQNIHTLLDAAMLQINQYLTVLASIGPPQPPISSTSTSTSSAASASTAPTTSNISEPVIPVDTTSTVTNTESSQQSAPPAPVSVETLSGAEGGETTTEEPDNVELRRRRLQKLETGTTDSQ.

A helical membrane pass occupies residues methionine 1–leucine 19. Over lysine 20 to proline 35 the chain is Lumenal. Residues serine 36–glycine 56 traverse the membrane as a helical segment. The Cytoplasmic segment spans residues lysine 57–aspartate 92. A helical transmembrane segment spans residues phenylalanine 93–leucine 113. Topologically, residues alanine 114–tryptophan 129 are lumenal. Residues leucine 130 to valine 150 traverse the membrane as a helical segment. Residues serine 151–serine 163 are Cytoplasmic-facing. The chain crosses the membrane as a helical span at residues valine 164–isoleucine 184. Residues lysine 185–valine 218 are Lumenal-facing. The chain crosses the membrane as a helical span at residues leucine 219–isoleucine 239. Residues lysine 230–arginine 264 are interaction with p53/TP53. At arginine 240–glutamine 605 the chain is on the cytoplasmic side. Residues cysteine 285, cysteine 288, cysteine 301, histidine 303, histidine 306, cysteine 309, cysteine 320, and cysteine 323 each contribute to the Zn(2+) site. The segment at cysteine 285–arginine 324 adopts an RING-type; atypical zinc-finger fold. Low complexity predominate over residues threonine 334–threonine 355. A disordered region spans residues threonine 334–proline 433. A compositionally biased stretch (pro residues) spans proline 356–glycine 391. Residues proline 403–glycine 414 show a composition bias toward low complexity. Residues glutamate 415–glutamine 424 show a composition bias toward polar residues. Positions glutamate 465–methionine 496 form a coiled coil. Residues glutamine 513 to glutamine 605 form a disordered region. Residues isoleucine 516–serine 539 are compositionally biased toward low complexity. Positions aspartate 546–glutamate 555 are enriched in polar residues. Residues serine 556–threonine 579 are compositionally biased toward low complexity.

It belongs to the HRD1 family. In terms of assembly, homodimer.

It localises to the endoplasmic reticulum membrane. It carries out the reaction S-ubiquitinyl-[E2 ubiquitin-conjugating enzyme]-L-cysteine + [acceptor protein]-L-lysine = [E2 ubiquitin-conjugating enzyme]-L-cysteine + N(6)-ubiquitinyl-[acceptor protein]-L-lysine.. Its pathway is protein modification; protein ubiquitination. Functionally, E3 ubiquitin-protein ligase which accepts ubiquitin specifically from endoplasmic reticulum-associated UBC7 E2 ligase and transfers it to substrates, promoting their degradation. Component of the endoplasmic reticulum quality control (ERQC) system also called ER-associated degradation (ERAD) involved in ubiquitin-dependent degradation of misfolded endoplasmic reticulum proteins. Also promotes the degradation of normal but naturally short-lived proteins. Protects cells from ER stress-induced apoptosis. Sequesters p53 in the cytoplasm and promotes its degradation, thereby negatively regulating its biological function in transcription, cell cycle regulation and apoptosis. The sequence is that of E3 ubiquitin-protein ligase synoviolin A (syvn1-a) from Xenopus laevis (African clawed frog).